The chain runs to 687 residues: DnaJ protein ERDJ2A (687 aa).

Topologically, residues 1–8 (MAASEENS) are lumenal. A helical transmembrane segment spans residues 9–29 (ALFPIFILTIMAIPLVPYTMV). At 30 to 65 (KLSGALSKKQRTIHCQCLECDRSGKYKRSLFKKISN) the chain is on the cytoplasmic side. A helical membrane pass occupies residues 66–86 (FSTWSNLTLVLLWVVMIFLIY). Over 87 to 190 (YTKNMSREAQ…FLLDIDGASG (104 aa)) the chain is Lumenal. Residue Asn90 is glycosylated (N-linked (GlcNAc...) asparagine). The 66-residue stretch at 99-164 (DPFSILGLEP…VSRENFEKYG (66 aa)) folds into the J domain. A helical transmembrane segment spans residues 191-211 (GILLLWIVGVCILLPLVIAVI). Residues 205-603 (PLVIAVIYLS…IGCDKKQALK (399 aa)) enclose the SEC63 domain. Topologically, residues 212–687 (YLSRSSKYTG…SSEESGSEEE (476 aa)) are cytoplasmic. The segment at 619-687 (SDEGAIAEEG…SSEESGSEEE (69 aa)) is disordered. Residues 623–654 (AIAEEGMEEEDEIEEEDYDDDYESEYSEDEDE) are compositionally biased toward acidic residues.

Interacts with OEP61/TPR7. Expressed in leaves, flower buds and flowers.

Its subcellular location is the endoplasmic reticulum membrane. Required for integral membrane and secreted preprotein translocation across the endoplasmic reticulum membrane. The polypeptide is DnaJ protein ERDJ2A (ERDJ2A) (Arabidopsis thaliana (Mouse-ear cress)).